A 658-amino-acid polypeptide reads, in one-letter code: Carnitine O-palmitoyltransferase 2, mitochondrial (658 aa).

The transit peptide at 1 to 25 directs the protein to the mitochondrion; that stretch reads MVARLLLRSWSRGLAVGPGAPCRPL. Residues 26 to 178 are Mitochondrial matrix-facing; sequence STGFEPSQYL…DLLEPEVFHL (153 aa). Position 69 is an N6-succinyllysine (lysine 69). At lysine 79 the chain carries N6-acetyllysine. Lysine 85 is modified (N6-succinyllysine). The note=Mitochondrial inner membrane intramembrane region spans 179–208; sequence NPAKSDTDTFKRFIRFVPSFLSWYGAYLVN. Residues 209-658 lie on the Mitochondrial matrix side of the membrane; the sequence is AYPLDMSQYY…DALEGKMIKT (450 aa). Position 239 is an N6-acetyllysine; alternate (lysine 239). Position 239 is an N6-succinyllysine; alternate (lysine 239). Residue histidine 372 is the Proton acceptor of the active site. Position 418 is an N6-acetyllysine; alternate (lysine 418). Residue lysine 418 is modified to N6-succinyllysine; alternate. N6-succinyllysine is present on residues lysine 424 and lysine 439. 452–464 provides a ligand contact to CoA; it reads GREFLKKQKLSPD. Tyrosine 486, serine 488, and threonine 499 together coordinate (R)-carnitine. Lysine 510 carries the N6-acetyllysine; alternate modification. Residue lysine 510 is modified to N6-succinyllysine; alternate.

Belongs to the carnitine/choline acetyltransferase family.

Its subcellular location is the mitochondrion inner membrane. It catalyses the reaction (R)-carnitine + hexadecanoyl-CoA = O-hexadecanoyl-(R)-carnitine + CoA. It carries out the reaction octanoyl-CoA + (R)-carnitine = O-octanoyl-(R)-carnitine + CoA. The catalysed reaction is decanoyl-CoA + (R)-carnitine = O-decanoyl-(R)-carnitine + CoA. The enzyme catalyses dodecanoyl-CoA + (R)-carnitine = O-dodecanoyl-R-carnitine + CoA. It catalyses the reaction tetradecanoyl-CoA + (R)-carnitine = O-tetradecanoyl-(R)-carnitine + CoA. It carries out the reaction (R)-carnitine + octadecanoyl-CoA = O-octadecanoyl-(R)-carnitine + CoA. The catalysed reaction is eicosanoyl-CoA + (R)-carnitine = O-eicosanoyl-(R)-carnitine + CoA. The enzyme catalyses (9Z)-tetradecenoyl-CoA + (R)-carnitine = O-(9Z)-tetradecenoyl-(R)-carnitine + CoA. It catalyses the reaction (5Z)-tetradecenoyl-CoA + (R)-carnitine = O-(5Z)-tetradecenoyl-(R)-carnitine + CoA. It carries out the reaction (R)-carnitine + (9Z)-octadecenoyl-CoA = O-(9Z)-octadecenoyl-(R)-carnitine + CoA. The catalysed reaction is 4,8-dimethylnonanoyl-CoA + (R)-carnitine = O-4,8-dimethylnonanoyl-(R)-carnitine + CoA. It functions in the pathway lipid metabolism; fatty acid beta-oxidation. Involved in the intramitochondrial synthesis of acylcarnitines from accumulated acyl-CoA metabolites. Reconverts acylcarnitines back into the respective acyl-CoA esters that can then undergo beta-oxidation, an essential step for the mitochondrial uptake of long-chain fatty acids and their subsequent beta-oxidation in the mitochondrion. Active with medium (C8-C12) and long-chain (C14-C18) acyl-CoA esters. In Bos taurus (Bovine), this protein is Carnitine O-palmitoyltransferase 2, mitochondrial (CPT2).